The primary structure comprises 115 residues: UPF0122 protein lp_1634 (115 aa).

It belongs to the UPF0122 family.

Its function is as follows. Might take part in the signal recognition particle (SRP) pathway. This is inferred from the conservation of its genetic proximity to ftsY/ffh. May be a regulatory protein. The chain is UPF0122 protein lp_1634 from Lactiplantibacillus plantarum (strain ATCC BAA-793 / NCIMB 8826 / WCFS1) (Lactobacillus plantarum).